Consider the following 484-residue polypeptide: UDP-N-acetylmuramoyl-L-alanyl-D-glutamate--2,6-diaminopimelate ligase (484 aa).

Position 30 (Ser-30) interacts with UDP-N-acetyl-alpha-D-muramoyl-L-alanyl-D-glutamate. Position 109–115 (109–115) interacts with ATP; that stretch reads GTNGKTS. UDP-N-acetyl-alpha-D-muramoyl-L-alanyl-D-glutamate is bound by residues 151 to 152, Ser-178, and Arg-186; that span reads TT. Position 218 is an N6-carboxylysine (Lys-218). Residues Arg-379, 403 to 406, Gly-455, and Glu-459 each bind meso-2,6-diaminopimelate; that span reads DNPR. The Meso-diaminopimelate recognition motif signature appears at 403–406; that stretch reads DNPR.

It belongs to the MurCDEF family. MurE subfamily. Requires Mg(2+) as cofactor. In terms of processing, carboxylation is probably crucial for Mg(2+) binding and, consequently, for the gamma-phosphate positioning of ATP.

It is found in the cytoplasm. It catalyses the reaction UDP-N-acetyl-alpha-D-muramoyl-L-alanyl-D-glutamate + meso-2,6-diaminopimelate + ATP = UDP-N-acetyl-alpha-D-muramoyl-L-alanyl-gamma-D-glutamyl-meso-2,6-diaminopimelate + ADP + phosphate + H(+). It participates in cell wall biogenesis; peptidoglycan biosynthesis. Functionally, catalyzes the addition of meso-diaminopimelic acid to the nucleotide precursor UDP-N-acetylmuramoyl-L-alanyl-D-glutamate (UMAG) in the biosynthesis of bacterial cell-wall peptidoglycan. The chain is UDP-N-acetylmuramoyl-L-alanyl-D-glutamate--2,6-diaminopimelate ligase from Clostridioides difficile (strain 630) (Peptoclostridium difficile).